A 1959-amino-acid polypeptide reads, in one-letter code: Sodium channel protein type 10 subunit alpha (1959 aa).

The Cytoplasmic segment spans residues 1–125; the sequence is MEFPIGSVGT…FNLIRRTAIK (125 aa). Positions 30 to 53 are disordered; it reads AHGAAKKARAKHGERKGQDEKPRP. Residues 33–43 show a composition bias toward basic residues; it reads AAKKARAKHGE. Basic and acidic residues predominate over residues 44-53; that stretch reads RKGQDEKPRP. The I repeat unit spans residues 116-404; it reads FNLIRRTAIK…VTMAYEEQNQ (289 aa). A helical membrane pass occupies residues 126-149; it reads VSVHAWFSIFITITILFNCVCMTQ. Residues 150 to 154 lie on the Extracellular side of the membrane; the sequence is NDLPE. The helical transmembrane segment at 155 to 174 threads the bilayer; sequence KIEYAFTVIYTFEALIKILA. Residues 175–187 are Cytoplasmic-facing; that stretch reads RGFCLNEFTYLRD. Residues 188 to 206 form a helical membrane-spanning segment; sequence PWNWLDFSVITLAYVGAAI. At 207-212 the chain is on the extracellular side; it reads DLRGIS. A helical; Voltage-sensor transmembrane segment spans residues 213 to 232; the sequence is GLRTFRVLRALKTVSVIPGL. The Cytoplasmic segment spans residues 233–248; sequence KVIVGALIHSVRKLAD. The helical transmembrane segment at 249-272 threads the bilayer; that stretch reads VTILTVFCLSVFALVGLQLFKGNL. Topologically, residues 273 to 340 are extracellular; that stretch reads KNKCIKRSTD…PDFNYTSFDS (68 aa). A disulfide bond links cysteine 276 and cysteine 318. Residues asparagine 288, asparagine 311, and asparagine 334 are each glycosylated (N-linked (GlcNAc...) asparagine). The segment at residues 341–365 is an intramembrane region (pore-forming); that stretch reads FAWAFLSLFRLMTQDSWERLYQQTL. At 366 to 372 the chain is on the extracellular side; it reads RASGKMY. A helical membrane pass occupies residues 373-398; it reads MVFFVLVIFLGSFYLVNLILAVVTMA. Residues 399–659 lie on the Cytoplasmic side of the membrane; sequence YEEQNQATIA…KWMKFKMVLF (261 aa). Phosphoserine is present on residues serine 440, serine 443, serine 466, and serine 478. Disordered regions lie at residues 442-484 and 510-578; these read HSHN…YNQR and SQDV…ELTT. The segment covering 475 to 484 has biased composition (polar residues); that stretch reads SPQSDPYNQR. The span at 523-533 shows a compositional bias: basic and acidic residues; sequence GVFHGDHESHR. 2 positions are modified to phosphoserine: serine 612 and serine 615. The stretch at 647-911 is one II repeat; the sequence is CCPKWMKFKM…EDDGEVNNLQ (265 aa). A helical transmembrane segment spans residues 660-684; sequence ELVTDPFAELTITLCIVVNTIFMAM. Topologically, residues 685 to 695 are extracellular; it reads EHYPMTDAFDA. The chain crosses the membrane as a helical span at residues 696–719; sequence MLQAGNIVFTVFFTMEMAFKIIAF. Over 720-727 the chain is Cytoplasmic; the sequence is DPYYYFQK. The chain crosses the membrane as a helical span at residues 728–747; sequence KWNVFDCVIVTVSLLELSIA. The Extracellular portion of the chain corresponds to 748-753; the sequence is KKGSLS. A helical; Voltage-sensor membrane pass occupies residues 754-773; it reads VLRTFRLLRVFKLAKSWPTL. The Cytoplasmic segment spans residues 774-789; the sequence is NTLIKIIGNSVGALGN. The chain crosses the membrane as a helical span at residues 790–810; sequence LTFILAIIVFIFALVGKQLLG. Over 811 to 834 the chain is Extracellular; it reads EDYGCRKDGTALWNEGQLRWHMCD. Residues 835–855 constitute an intramembrane region (pore-forming); sequence FFHSFLVIFRILCGEWIENMW. Over 856 to 864 the chain is Extracellular; that stretch reads VCMQVSEKS. An intrachain disulfide couples cysteine 857 to cysteine 866. A helical transmembrane segment spans residues 865–890; the sequence is ICLILFLTVMVLGNLVVLNLFIALLL. The Cytoplasmic segment spans residues 891-1149; the sequence is NSFSADNLTA…GWQVRKTCYR (259 aa). A compositionally biased stretch (acidic residues) spans 1004-1016; sequence GESDLDELEEDIE. Disordered stretches follow at residues 1004–1034 and 1071–1097; these read GESDLDELEEDIEQNSQSSWREESPKGQQDQ and ATPQVPAEGVDDTSSSEGSTVDCPDPE. The stretch at 1142 to 1451 is one III repeat; that stretch reads QVRKTCYRIV…KKYYNAMKKL (310 aa). Residues 1150 to 1173 form a helical membrane-spanning segment; sequence IVEHSWFESFIIFMILLSSGALAF. Topologically, residues 1174-1186 are extracellular; the sequence is EDNYLEQKPRVKS. The helical transmembrane segment at 1187–1212 threads the bilayer; that stretch reads MLEYTDRVFTFIFVFEMLLKWVAYGF. Over 1213–1218 the chain is Cytoplasmic; sequence KKYFTN. The helical transmembrane segment at 1219–1240 threads the bilayer; sequence AWCWLDFLIVNISLTSLIAKIL. Residues 1241–1244 lie on the Extracellular side of the membrane; that stretch reads DYSD. A helical; Voltage-sensor membrane pass occupies residues 1245–1266; that stretch reads VASLKALRTLRALRPLRALSRF. Topologically, residues 1267 to 1285 are cytoplasmic; the sequence is EGMRVVVDALVGAIPSIMN. Residues 1286–1313 traverse the membrane as a helical segment; sequence VLLVCLIFWLIFSIMGVNLFAGKFSRCI. At 1314 to 1355 the chain is on the extracellular side; that stretch reads DTSNNPFSVVNSTIVNNKSECRNQNHTGHFFWVNVKVNFDNV. Residues 1356-1377 constitute an intramembrane region (pore-forming); that stretch reads AMGYLALLQVATFKGWMDIMYA. Over 1378-1393 the chain is Extracellular; it reads AVDSREINSQPQWEDN. A helical membrane pass occupies residues 1394–1420; that stretch reads LYMYLYFVVFIIFGGFFTLNLFVGVII. Over 1421 to 1473 the chain is Cytoplasmic; it reads DNFNQQKKKLGGQDIFMTEEQKKYYNAMKKLGSKKPQKPIPRPLNKYQGFVFD. Serine 1453 is subject to Phosphoserine; by PKC. Residues 1460–1759 form an IV repeat; that stretch reads IPRPLNKYQG…WEKFDPEATQ (300 aa). A helical membrane pass occupies residues 1474–1497; the sequence is IVTRQAFDIIIMVLICLNMITMMV. Over 1498–1508 the chain is Extracellular; it reads ETDGQSEEKTK. Residues 1509–1532 form a helical membrane-spanning segment; that stretch reads ILGRINQFFVAVFTGECVMKMFAL. Residues 1533–1538 lie on the Cytoplasmic side of the membrane; sequence RQYYFT. Residues 1539–1562 traverse the membrane as a helical segment; sequence NGWNVFDFIVVILSIGSLVFSAIL. The Extracellular portion of the chain corresponds to 1563-1574; that stretch reads KSLESYFSPTLF. Residues 1575-1596 form a helical; Voltage-sensor membrane-spanning segment; it reads RVIRLARIGRILRLIRAAKGIR. The Cytoplasmic segment spans residues 1597–1611; it reads TLLFALMMSLPALFN. A helical membrane pass occupies residues 1612-1634; the sequence is IGLLLFLVMFIYSIFGMASFANV. Residues 1635-1648 are Extracellular-facing; sequence VEEAGIDDMFNFQT. The segment at residues 1649–1671 is an intramembrane region (pore-forming); sequence FGNSMLCLFQITTSAGWDGLLSP. Residues 1672–1699 are Extracellular-facing; it reads ILNTGPPYCDPNLSNNNTSKGNCGSPTV. The helical transmembrane segment at 1700 to 1724 threads the bilayer; the sequence is GIVFFTTYIIISFLIVVNMYIAVIL. The Cytoplasmic portion of the chain corresponds to 1725-1959; sequence ENFNVATEES…SKEGDSPGPQ (235 aa). The region spanning 1853-1882 is the IQ domain; that stretch reads EDISATVIQKAYRSYVLQRSLTLSNPLRVP. The interval 1901-1959 is disordered; sequence ANDSGRLPDKSETTSATSFPPSYDSVTRGLSDRVNISTSNSMHNEDEVTSKEGDSPGPQ. The segment covering 1943–1959 has biased composition (basic and acidic residues); the sequence is HNEDEVTSKEGDSPGPQ.

It belongs to the sodium channel (TC 1.A.1.10) family. Nav1.8/SCN10A subfamily. In terms of assembly, the channel consists of an ion conducting pore forming alpha-subunit regulated by one or more associated auxiliary subunits SCN1B, SCN2B and SCN3B; electrophysiological properties may vary depending on the type of the associated beta subunits. Found in a number of complexes with PRX, DYNLT1 and PDZD2. Interacts with proteins such as FSTL1, PRX, DYNLT1, PDZD2, S100A10 and many others. Interacts with NEDD4 and NEDD4L. In terms of processing, ubiquitinated by NEDD4L; which promotes its endocytosis. Post-translationally, phosphorylation at Ser-1453 by PKC in a highly conserved cytoplasmic loop slows inactivation of the sodium channel and reduces peak sodium currents. Lacks the cysteine which covalently binds the conotoxin GVIIJ. This cysteine (position 816) is speculated in other sodium channel subunits alpha to be implied in covalent binding with the sodium channel subunit beta-2 or beta-4.

Its subcellular location is the cell membrane. It catalyses the reaction Na(+)(in) = Na(+)(out). Functionally, tetrodotoxin-resistant channel that mediates the voltage-dependent sodium ion permeability of excitable membranes. Assuming opened or closed conformations in response to the voltage difference across the membrane, the protein forms a sodium-selective channel through which sodium ions may pass in accordance with their electrochemical gradient. Plays a role in neuropathic pain mechanisms. This is Sodium channel protein type 10 subunit alpha (Scn10a) from Onychomys torridus (Southern grasshopper mouse).